The primary structure comprises 397 residues: Acetyl-CoA acetyltransferase, cytosolic (397 aa).

An N-acetylmethionine modification is found at Met1. Cys92 (acyl-thioester intermediate) is an active-site residue. Lys200 carries the N6-acetyllysine modification. The CoA site is built by Arg223 and Ser226. 2 positions are modified to N6-acetyllysine: Lys233 and Lys235. Ser252 lines the CoA pocket. Residue Cys383 is the Proton donor/acceptor of the active site.

The protein belongs to the thiolase-like superfamily. Thiolase family. In terms of assembly, homotetramer.

The protein resides in the cytoplasm. The protein localises to the cytosol. It carries out the reaction 2 acetyl-CoA = acetoacetyl-CoA + CoA. Its pathway is lipid metabolism; fatty acid metabolism. Functionally, involved in the biosynthetic pathway of cholesterol. This chain is Acetyl-CoA acetyltransferase, cytosolic (Acat2), found in Rattus norvegicus (Rat).